A 2038-amino-acid polypeptide reads, in one-letter code: Non-reducing polyketide synthase ZEA1 (2038 aa).

Residues L9–H246 are N-terminal acylcarrier protein transacylase domain (SAT). The region spanning P364 to D794 is the Ketosynthase family 3 (KS3) domain. Catalysis depends on for beta-ketoacyl synthase activity residues C537, H672, and H711. The malonyl-CoA:ACP transacylase (MAT) domain stretch occupies residues V888 to L1172. The active-site For acyl/malonyl transferase activity is S979. The tract at residues S1221–L1572 is product template (PT) domain. The N-terminal hotdog fold stretch occupies residues H1254–K1405. In terms of domain architecture, PKS/mFAS DH spans H1254 to D1573. Residues I1425–D1573 are C-terminal hotdog fold. Residues Q1616–S1693 form the Carrier domain. At S1653 the chain carries O-(pantetheine 4'-phosphoryl)serine. A disordered region spans residues N1700–S1738. The segment covering D1709 to G1737 has biased composition (polar residues). A thioesterase (TE) domain region spans residues T1778–N1882. Residue H2021 is the For thioesterase activity of the active site.

It participates in mycotoxin biosynthesis. Functionally, non-reducing polyketide synthase; part of the gene cluster that mediates the biosynthesis of zearalenone (ZEA), a nonsteroid estrogen that is a contaminant of cereal grains and causes estrogenic disorders in humans and animals. The ZEA backbone is synthesized from a single acetyl-CoA molecule and eight malonyl-CoA molecules. The reducing polyketide synthase ZEA2 is proposed to synthesize a reduced hexaketide intermediate by using different combinations of its reductive domains during each round of condensation. The hexaketide thioester is then transacylated to the non-reducing polyketide synthase ZEA1 and is further condensed with three malonyl-CoAs without reductive tailoring to yield a mixed reduced/unreduced nonaketide. ZEA1 must be able to interact with ZEA2 to facilitate starter-unit acyltransfer and initiate polyketide biosynthesis. ZEA1 also mediates the required C2-C7 cyclization to form the resorcylate core and catalyzes the formation of the macrolactone. ZEA1 exhibits broad starter-unit specificities toward fatty acyl-CoAs ranging in sizes between C6 and C16 and displays the highest activity toward decanoyl-CoA. ZEB1 is then responsible for the chemical conversion of beta-zearalenonol (beta-ZOL) to ZEA in the biosynthetic pathway. The polypeptide is Non-reducing polyketide synthase ZEA1 (Gibberella zeae (strain ATCC MYA-4620 / CBS 123657 / FGSC 9075 / NRRL 31084 / PH-1) (Wheat head blight fungus)).